Here is a 183-residue protein sequence, read N- to C-terminus: U3 small nucleolar ribonucleoprotein protein imp3 (183 aa).

An S4 RNA-binding domain is found at 108–174 (RRLPVVMRNI…IKKHVMDYNN (67 aa)).

Belongs to the universal ribosomal protein uS4 family. As to quaternary structure, component of a heterotrimeric complex containing imp3, imp4 and mpp10.

It is found in the nucleus. Its subcellular location is the nucleolus. In terms of biological role, component of the U3 small nucleolar ribonucleoprotein. Required for the early cleavages at sites A0, A1 and A2 during 18S ribosomal pre-RNA processing. This Caenorhabditis elegans protein is U3 small nucleolar ribonucleoprotein protein imp3.